A 2458-amino-acid polypeptide reads, in one-letter code: Highly reducing polyketide synthase alnA (2458 aa).

Residues T48–D473 form the Ketosynthase family 3 (KS3) domain. Residues C221, H356, and H396 each act as for beta-ketoacyl synthase activity in the active site. The disordered stretch occupies residues H488 to Q515. The segment covering D499–Q515 has biased composition (low complexity). The segment at V609–K932 is malonyl-CoA:ACP transacylase (MAT) domain. Catalysis depends on S697, which acts as the For malonyltransferase activity. Residues N1000–A1130 are N-terminal hotdog fold. Positions N1000–T1307 constitute a PKS/mFAS DH domain. A dehydratase (DH) domain region spans residues D1001–A1305. The Proton acceptor; for dehydratase activity role is filled by H1032. Positions T1148–T1307 are C-terminal hotdog fold. D1218 (proton donor; for dehydratase activity) is an active-site residue. Residues G1740–A2051 form an enoylreductase (ER) domain region. Residues K2076 to N2264 are ketoreductase (KR) domain. The Carrier domain maps to S2359–S2441. S2401 bears the O-(pantetheine 4'-phosphoryl)serine mark.

Its pathway is polyketide biosynthesis. In terms of biological role, highly reducing polyketide synthase; part of the gene cluster that mediates the biosynthesis of asperlin, a polyketide showing anti-inflammatory, antitumor and antibiotic activities. The first step of the asperlin biosynthesis is the production of the intermediate 2,4,6-octatrienoic acid by the highly redusing polyketide synthase alnA with cleavage of the PKS product by the esterase alnB. 2,4,6-octatrienoic acid is further converted to asperlin via several steps involving the remaining enzymes from the cluster. This chain is Highly reducing polyketide synthase alnA, found in Emericella nidulans (strain FGSC A4 / ATCC 38163 / CBS 112.46 / NRRL 194 / M139) (Aspergillus nidulans).